Consider the following 438-residue polypeptide: Dihydrolipoyllysine-residue acetyltransferase component of pyruvate dehydrogenase complex (438 aa).

One can recognise a Lipoyl-binding domain in the interval 1 to 76 (MFKVKFADIG…KVGDVVMEIE (76 aa)). At Lys42 the chain carries N6-lipoyllysine. The Peripheral subunit-binding (PSBD) domain occupies 132 to 169 (KATPLARKVAADLNIDLSLVTPTGPNQRILVADIKNHQ). A compositionally biased stretch (polar residues) spans 172–181 (STQLASQPIS). The interval 172-192 (STQLASQPISQPAPTPSPSAH) is disordered. Residue His411 is part of the active site.

It belongs to the 2-oxoacid dehydrogenase family. Forms a 24-polypeptide structural core with octahedral symmetry. The cofactor is (R)-lipoate.

It catalyses the reaction N(6)-[(R)-dihydrolipoyl]-L-lysyl-[protein] + acetyl-CoA = N(6)-[(R)-S(8)-acetyldihydrolipoyl]-L-lysyl-[protein] + CoA. The pyruvate dehydrogenase complex catalyzes the overall conversion of pyruvate to acetyl-CoA and CO(2). It contains multiple copies of three enzymatic components: pyruvate dehydrogenase (E1), dihydrolipoamide acetyltransferase (E2) and lipoamide dehydrogenase (E3). The sequence is that of Dihydrolipoyllysine-residue acetyltransferase component of pyruvate dehydrogenase complex (pdhC) from Mycoplasma capricolum subsp. capricolum (strain California kid / ATCC 27343 / NCTC 10154).